The following is a 44-amino-acid chain: Photosystem I reaction center subunit IX (44 aa).

A helical transmembrane segment spans residues 7 to 27 (YLSTAPVLAISWLIFVAGLLI).

Belongs to the PsaJ family.

It localises to the plastid. It is found in the chloroplast thylakoid membrane. Its function is as follows. May help in the organization of the PsaE and PsaF subunits. The chain is Photosystem I reaction center subunit IX from Larix decidua (European larch).